Consider the following 314-residue polypeptide: Olfactory receptor 5G9 (314 aa).

At 1–25 (MADENYTRITEFIFIGLRYHPNLQV) the chain is on the extracellular side. Asn5 carries N-linked (GlcNAc...) asparagine glycosylation. The chain crosses the membrane as a helical span at residues 26-46 (FLFLLFLLFYLVTMTGNLGMI). Residues 47–54 (ILIRVDSR) are Cytoplasmic-facing. The helical transmembrane segment at 55-75 (LHTPMYFFLSHLSFVDICFSS) threads the bilayer. Topologically, residues 76–99 (VVAPKMLTDFFADKKAISFLGCVL) are extracellular. Cys97 and Cys189 form a disulfide bridge. The helical transmembrane segment at 100–120 (QQWFFGFFVAIECLLLASMAY) threads the bilayer. The Cytoplasmic portion of the chain corresponds to 121 to 133 (DRYVAICNPLLYS). A helical membrane pass occupies residues 134-154 (VAMSQRLCIQLVIGPYAVGFF). Topologically, residues 155–196 (NTMTHTTAAFRLPFCGSNIINHFFCDMSPILSLICADIRINK) are extracellular. The chain crosses the membrane as a helical span at residues 197 to 217 (LLVFIVAGAVLIVSSTTIIVS). Topologically, residues 218–237 (YFHILIAILRIRSAEGRRKA) are cytoplasmic. Residues 238-258 (FSTCSSHVTAVSILYGTLFFI) traverse the membrane as a helical segment. Over 259 to 271 (YVRPSAISSLDLN) the chain is Extracellular. A helical membrane pass occupies residues 272 to 292 (KVVSVFYTAVIPMLNPLIYSL). Residues 293 to 314 (RNKEVKSAMGRTVAKAKVFLKN) lie on the Cytoplasmic side of the membrane.

It belongs to the G-protein coupled receptor 1 family.

The protein resides in the cell membrane. In terms of biological role, potential odorant receptor. This chain is Olfactory receptor 5G9, found in Mus musculus (Mouse).